Consider the following 369-residue polypeptide: MFNARRLIAATLLMSCAFGAHAERLKDIASISGVRANQLIGYGLVVGLNGTGDQTTQTPFTLQTFNNMLSQFGIKVPPGSGNVQLKNVAAVSVHADLPPFAKPGQVVDITVSSIGNSKSLRGGSLLMTPLKGIDGNVYAIAQGNLVVGGFDAEGRDGSKITVNVPSAGRIPGGASVERAVPSGFNQGNSLTLNLNRPDFTTAKRIVDKVNELLGPGVAQAVDGGSVRVTAPMDPSQRVDYLSILENLEIDPGQAVAKVIINSRTGTIVIGQNVKVSPAAVTHGSLTVTITEDPIVSQPGPFSNGQTAVVPRSRVNAQQEAKPMFKFGPGTTLDEIVRAVNQVGAAPSDLMAILEALKQAGALQADLIVI.

The first 22 residues, 1-22 (MFNARRLIAATLLMSCAFGAHA), serve as a signal peptide directing secretion.

Belongs to the FlgI family. The basal body constitutes a major portion of the flagellar organelle and consists of four rings (L,P,S, and M) mounted on a central rod.

It localises to the periplasm. Its subcellular location is the bacterial flagellum basal body. Functionally, assembles around the rod to form the L-ring and probably protects the motor/basal body from shearing forces during rotation. The sequence is that of Flagellar P-ring protein from Pseudomonas entomophila (strain L48).